A 508-amino-acid polypeptide reads, in one-letter code: 4-trimethylaminobutyraldehyde dehydrogenase A (508 aa).

Residues Lys194 and 246-250 each bind NAD(+); that span reads GSVPT. Glu268 acts as the Proton acceptor in catalysis. Residue Cys302 is the Nucleophile of the active site. Glu405 is a binding site for NAD(+).

It belongs to the aldehyde dehydrogenase family. As to quaternary structure, homotetramer.

The protein localises to the cytoplasm. Its subcellular location is the cytosol. The catalysed reaction is 4-(trimethylamino)butanal + NAD(+) + H2O = 4-(trimethylamino)butanoate + NADH + 2 H(+). It carries out the reaction an aldehyde + NAD(+) + H2O = a carboxylate + NADH + 2 H(+). It participates in amine and polyamine biosynthesis; carnitine biosynthesis. Converts gamma-trimethylaminobutyraldehyde into gamma-butyrobetaine with high efficiency (in vitro). Can catalyze the irreversible oxidation of a broad range of aldehydes to the corresponding acids in an NAD-dependent reaction, but with low efficiency. This is 4-trimethylaminobutyraldehyde dehydrogenase A (aldh9a1a) from Danio rerio (Zebrafish).